We begin with the raw amino-acid sequence, 281 residues long: CDAN1-interacting nuclease 1 (281 aa).

Phosphothreonine is present on Thr114.

The protein localises to the nucleus. It localises to the cytoplasm. In terms of biological role, plays a role in erythroid cell differentiation. This Mus musculus (Mouse) protein is CDAN1-interacting nuclease 1.